Consider the following 285-residue polypeptide: Phosphatidylserine decarboxylase proenzyme (285 aa).

Residues D89, H146, and S252 each act as charge relay system; for autoendoproteolytic cleavage activity in the active site. The active-site Schiff-base intermediate with substrate; via pyruvic acid; for decarboxylase activity is S252. At S252 the chain carries Pyruvic acid (Ser); by autocatalysis.

The protein belongs to the phosphatidylserine decarboxylase family. PSD-B subfamily. Prokaryotic type I sub-subfamily. Heterodimer of a large membrane-associated beta subunit and a small pyruvoyl-containing alpha subunit. Requires pyruvate as cofactor. Is synthesized initially as an inactive proenzyme. Formation of the active enzyme involves a self-maturation process in which the active site pyruvoyl group is generated from an internal serine residue via an autocatalytic post-translational modification. Two non-identical subunits are generated from the proenzyme in this reaction, and the pyruvate is formed at the N-terminus of the alpha chain, which is derived from the carboxyl end of the proenzyme. The autoendoproteolytic cleavage occurs by a canonical serine protease mechanism, in which the side chain hydroxyl group of the serine supplies its oxygen atom to form the C-terminus of the beta chain, while the remainder of the serine residue undergoes an oxidative deamination to produce ammonia and the pyruvoyl prosthetic group on the alpha chain. During this reaction, the Ser that is part of the protease active site of the proenzyme becomes the pyruvoyl prosthetic group, which constitutes an essential element of the active site of the mature decarboxylase.

It localises to the cell membrane. It catalyses the reaction a 1,2-diacyl-sn-glycero-3-phospho-L-serine + H(+) = a 1,2-diacyl-sn-glycero-3-phosphoethanolamine + CO2. The protein operates within phospholipid metabolism; phosphatidylethanolamine biosynthesis; phosphatidylethanolamine from CDP-diacylglycerol: step 2/2. Catalyzes the formation of phosphatidylethanolamine (PtdEtn) from phosphatidylserine (PtdSer). The protein is Phosphatidylserine decarboxylase proenzyme of Vibrio vulnificus (strain CMCP6).